Reading from the N-terminus, the 407-residue chain is UPF0761 membrane protein AZOSEA40600 (407 aa).

Transmembrane regions (helical) follow at residues 29-49 (SLAF…IALF), 92-112 (GLTL…LMTI), 132-152 (LMVH…SVLA), 174-194 (FARL…YYAV), 207-227 (GGIA…LFIV), and 239-259 (FAVL…ILLG).

This sequence belongs to the UPF0761 family.

The protein localises to the cell inner membrane. This Aromatoleum aromaticum (strain DSM 19018 / LMG 30748 / EbN1) (Azoarcus sp. (strain EbN1)) protein is UPF0761 membrane protein AZOSEA40600.